The primary structure comprises 210 residues: MVETVHPKNDRLVWIDLEMTGLELDRHVIVEVAALITDADLNIIGEGVDLVVHATPEQLAEMDDFVTTMHTSSGLLEEIKASTVSLQEAEDAVLALIAQHCDPEHPAPLAGNSIATDRSFIRAQMPRLDKALHYRMVDVSSLKELSRRWAPRVYFNQPDKGMAHRALADIVESIRELDYYRRAWLISDPTTEDAEDAKANATASYQQFLQ.

One can recognise an Exonuclease domain in the interval 12–177 (LVWIDLEMTG…ADIVESIREL (166 aa)). Tyr-134 is an active-site residue.

It belongs to the oligoribonuclease family.

Its subcellular location is the cytoplasm. 3'-to-5' exoribonuclease specific for small oligoribonucleotides. The polypeptide is Oligoribonuclease (Corynebacterium diphtheriae (strain ATCC 700971 / NCTC 13129 / Biotype gravis)).